Reading from the N-terminus, the 684-residue chain is Protein-glutamine gamma-glutamyltransferase 4 (684 aa).

Active-site residues include C268, H327, and D350. 4 residues coordinate Ca(2+): N390, D392, E442, and E447.

It belongs to the transglutaminase superfamily. Transglutaminase family. Homodimer. The cofactor is Ca(2+). In terms of tissue distribution, prostate.

It catalyses the reaction L-glutaminyl-[protein] + L-lysyl-[protein] = [protein]-L-lysyl-N(6)-5-L-glutamyl-[protein] + NH4(+). Associated with the mammalian reproductive process. Catalyzes the cross-linking of proteins and the conjugation of polyamines to specific proteins in the seminal tract. This Homo sapiens (Human) protein is Protein-glutamine gamma-glutamyltransferase 4 (TGM4).